The chain runs to 139 residues: Maximins 4/H3 type 5 (139 aa).

Residues 1–18 form the signal peptide; that stretch reads MNFKYIFAVSFLIASAYA. Residues 19–43 constitute a propeptide that is removed on maturation; the sequence is RSVQNDEQSLSQRDVLEEESLREIR. Asn-70 is subject to Asparagine amide. The propeptide occupies 74–118; the sequence is TAEEHEVMKRLEAVMRDLDSLDHPEEASERETRGFNQDEIAKEKR. The residue at position 138 (Ile-138) is an Isoleucine amide.

Belongs to the bombinin family. Expressed by the skin glands.

Its subcellular location is the secreted. Maximin-4 shows antibacterial activity against both Gram-positive and Gram-negative bacteria. It also shows antimicrobial activity against the fungus C.albicans, but not against A.flavus nor P.uticale. It has little hemolytic activity. It does not possess a significant cytotoxicity against tumor cell lines. It does not possess a significant anti-HIV activity. In terms of biological role, maximin-H3 shows antibacterial activity against both Gram-positive and Gram-negative bacteria. It also shows antimicrobial activity against the fungus C.albicans. Shows strong hemolytic activity. This Bombina maxima (Giant fire-bellied toad) protein is Maximins 4/H3 type 5.